The sequence spans 321 residues: Probable pectate lyase A (321 aa).

Positions 1–18 (MKFVATLIACGLSGLALA) are cleaved as a signal peptide. N-linked (GlcNAc...) asparagine glycosylation is present at Asn-93. The Ca(2+) site is built by Asp-134, Asp-163, and Asp-167. Arg-220 is a catalytic residue. N-linked (GlcNAc...) asparagine glycosylation is present at Asn-238.

The protein belongs to the polysaccharide lyase 1 family. Requires Ca(2+) as cofactor.

It is found in the secreted. The catalysed reaction is Eliminative cleavage of (1-&gt;4)-alpha-D-galacturonan to give oligosaccharides with 4-deoxy-alpha-D-galact-4-enuronosyl groups at their non-reducing ends.. Pectinolytic enzyme consist of four classes of enzymes: pectin lyase, polygalacturonase, pectin methylesterase and rhamnogalacturonase. Among pectinolytic enzymes, pectin lyase is the most important in depolymerization of pectin, since it cleaves internal glycosidic bonds of highly methylated pectins. Favors pectate, the anion, over pectin, the methyl ester. The protein is Probable pectate lyase A (plyA) of Neosartorya fischeri (strain ATCC 1020 / DSM 3700 / CBS 544.65 / FGSC A1164 / JCM 1740 / NRRL 181 / WB 181) (Aspergillus fischerianus).